A 221-amino-acid polypeptide reads, in one-letter code: GFP-like non-fluorescent chromoprotein (221 aa).

Residues 62–64 constitute a cross-link (2-iminomethyl-5-imidazolinone (Gln-Gly)); the sequence is QYG. 2,3-didehydrotyrosine is present on tyrosine 63.

Belongs to the GFP family. As to quaternary structure, homotetramer. Post-translationally, contains a chromophore consisting of modified amino acid residues. The chromophore is formed by autocatalytic backbone condensation between Xaa-N and Gly-(N+2), oxidation of Tyr-(N+1) to didehydrotyrosine, and formation of a double bond to the alpha-amino nitrogen of residue Xaa-N. Maturation of the chromophore requires nothing other than molecular oxygen. The precise stereochemistry of the tyrosine has not been determined.

Its function is as follows. Non-fluorescent pigment protein that is lilac in color. The protein is GFP-like non-fluorescent chromoprotein of Goniopora tenuidens (Anemone coral).